The sequence spans 61 residues: Small ribosomal subunit protein uS14 (61 aa).

Positions 24, 27, 40, and 43 each coordinate Zn(2+).

The protein belongs to the universal ribosomal protein uS14 family. Zinc-binding uS14 subfamily. As to quaternary structure, part of the 30S ribosomal subunit. Contacts proteins S3 and S10. Zn(2+) is required as a cofactor.

Binds 16S rRNA, required for the assembly of 30S particles and may also be responsible for determining the conformation of the 16S rRNA at the A site. This chain is Small ribosomal subunit protein uS14, found in Thermobifida fusca (strain YX).